We begin with the raw amino-acid sequence, 562 residues long: Dihydroxy-acid dehydratase (562 aa).

Asp80 is a binding site for Mg(2+). Cys121 provides a ligand contact to [2Fe-2S] cluster. Asp122 and Lys123 together coordinate Mg(2+). Lys123 carries the N6-carboxylysine modification. Cys194 lines the [2Fe-2S] cluster pocket. Glu446 is a binding site for Mg(2+). Catalysis depends on Ser472, which acts as the Proton acceptor.

Belongs to the IlvD/Edd family. As to quaternary structure, homodimer. Requires [2Fe-2S] cluster as cofactor. Mg(2+) is required as a cofactor.

It catalyses the reaction (2R)-2,3-dihydroxy-3-methylbutanoate = 3-methyl-2-oxobutanoate + H2O. It carries out the reaction (2R,3R)-2,3-dihydroxy-3-methylpentanoate = (S)-3-methyl-2-oxopentanoate + H2O. It participates in amino-acid biosynthesis; L-isoleucine biosynthesis; L-isoleucine from 2-oxobutanoate: step 3/4. It functions in the pathway amino-acid biosynthesis; L-valine biosynthesis; L-valine from pyruvate: step 3/4. Its function is as follows. Functions in the biosynthesis of branched-chain amino acids. Catalyzes the dehydration of (2R,3R)-2,3-dihydroxy-3-methylpentanoate (2,3-dihydroxy-3-methylvalerate) into 2-oxo-3-methylpentanoate (2-oxo-3-methylvalerate) and of (2R)-2,3-dihydroxy-3-methylbutanoate (2,3-dihydroxyisovalerate) into 2-oxo-3-methylbutanoate (2-oxoisovalerate), the penultimate precursor to L-isoleucine and L-valine, respectively. The polypeptide is Dihydroxy-acid dehydratase (Staphylococcus aureus (strain COL)).